Reading from the N-terminus, the 497-residue chain is Probable malate:quinone oxidoreductase (497 aa).

It belongs to the MQO family. The cofactor is FAD.

The enzyme catalyses (S)-malate + a quinone = a quinol + oxaloacetate. The protein operates within carbohydrate metabolism; tricarboxylic acid cycle; oxaloacetate from (S)-malate (quinone route): step 1/1. The protein is Probable malate:quinone oxidoreductase of Rhodopseudomonas palustris (strain ATCC BAA-98 / CGA009).